Reading from the N-terminus, the 481-residue chain is Glutamyl-tRNA(Gln) amidotransferase subunit A (481 aa).

Residues Lys-74 and Ser-149 each act as charge relay system in the active site. The active-site Acyl-ester intermediate is the Ser-173.

Belongs to the amidase family. GatA subfamily. Heterotrimer of A, B and C subunits.

The enzyme catalyses L-glutamyl-tRNA(Gln) + L-glutamine + ATP + H2O = L-glutaminyl-tRNA(Gln) + L-glutamate + ADP + phosphate + H(+). Functionally, allows the formation of correctly charged Gln-tRNA(Gln) through the transamidation of misacylated Glu-tRNA(Gln) in organisms which lack glutaminyl-tRNA synthetase. The reaction takes place in the presence of glutamine and ATP through an activated gamma-phospho-Glu-tRNA(Gln). The polypeptide is Glutamyl-tRNA(Gln) amidotransferase subunit A (Francisella philomiragia subsp. philomiragia (strain ATCC 25017 / CCUG 19701 / FSC 153 / O#319-036)).